The chain runs to 345 residues: Viral Fc-gamma receptor-like protein UL119 (345 aa).

A signal peptide spans 1–23 (MCSVLAIALVVALLGDMHPGVKS). Residues 23 to 42 (SSTTSAVTSPSNTTVTSTTS) are disordered. The Virion surface portion of the chain corresponds to 24–294 (STTSAVTSPS…KSDPLFEDRL (271 aa)). Residues asparagine 34, asparagine 48, asparagine 95, asparagine 104, asparagine 148, asparagine 179, asparagine 198, asparagine 217, asparagine 225, asparagine 241, asparagine 244, and asparagine 260 are each glycosylated (N-linked (GlcNAc...) asparagine; by host). Residues 91–190 (QVSLNATCKV…TWDLFTYPIY (100 aa)) enclose the Ig-like V-type domain. Residues 295-317 (LAYGVLAFLVFMVIILLYVTYML) form a helical membrane-spanning segment. Residues 318-345 (ARRRDWSYKRLEEPVEEKKHPVPYFKQW) are Intravirion-facing.

The protein localises to the virion membrane. Its function is as follows. Serves as a receptor for the Fc part of human IgG. May thus be involved in interfering with host Ig-mediated immune responses. This Human cytomegalovirus (strain AD169) (HHV-5) protein is Viral Fc-gamma receptor-like protein UL119 (UL119/UL118).